Consider the following 62-residue polypeptide: Large ribosomal subunit protein bL28 (62 aa).

The protein belongs to the bacterial ribosomal protein bL28 family.

In Clostridioides difficile (strain 630) (Peptoclostridium difficile), this protein is Large ribosomal subunit protein bL28.